Consider the following 164-residue polypeptide: Photosystem II extrinsic protein V (164 aa).

The first 27 residues, 1-27 (MNRISIYRIKVLAFLFAVSTYVYPASS), serve as a signal peptide directing secretion. Positions 64, 67, 68, and 119 each coordinate heme c.

It belongs to the cytochrome c family. PsbV subfamily. As to quaternary structure, PSII is composed of 1 copy each of membrane proteins PsbA, PsbB, PsbC, PsbD, PsbE, PsbF, PsbH, PsbI, PsbJ, PsbK, PsbL, PsbM, PsbT, PsbY, PsbZ, Psb30/Ycf12, at least 3 peripheral proteins of the oxygen-evolving complex and a large number of cofactors. It forms dimeric complexes. The extrinsic subunits in red algae are PsbO (OEC33), PsbQ', cytochrome c-550 and PsbU. Heme c serves as cofactor.

The protein localises to the plastid. It is found in the chloroplast thylakoid membrane. Its function is as follows. One of the extrinsic, lumenal subunits of photosystem II (PSII). PSII is a light-driven water plastoquinone oxidoreductase, using light energy to abstract electrons from H(2)O, generating a proton gradient subsequently used for ATP formation. The extrinsic proteins stabilize the structure of photosystem II oxygen-evolving complex (OEC), the ion environment of oxygen evolution and protect the OEC against heat-induced inactivation. The sequence is that of Photosystem II extrinsic protein V from Cyanidium caldarium (Red alga).